The sequence spans 273 residues: ABC transporter glutamine-binding protein GlnH (273 aa).

Positions 1 to 20 (MKKIFSLALISLFAVILLAA) are cleaved as a signal peptide. Residue cysteine 21 is the site of N-palmitoyl cysteine attachment. A lipid anchor (S-diacylglycerol cysteine) is attached at cysteine 21.

This sequence belongs to the bacterial solute-binding protein 3 family. In terms of assembly, the complex is composed of two ATP-binding proteins (GlnQ), two transmembrane proteins (GlnM and GlnP) and a solute-binding protein (GlnH).

The protein resides in the cell membrane. In terms of biological role, part of the ABC transporter complex GlnHMPQ involved in glutamine transport. The sequence is that of ABC transporter glutamine-binding protein GlnH (glnH) from Bacillus subtilis (strain 168).